The sequence spans 190 residues: Cytoglobin (190 aa).

The disordered stretch occupies residues 1 to 21 (MEKVPGDMEIERRERSEELSE). Residues 18–167 (ELSEAERKAV…IYSHVTAAYK (150 aa)) enclose the Globin domain. The cysteines at positions 38 and 83 are disulfide-linked. Residues His-81 and His-113 each contribute to the heme b site.

The protein belongs to the globin family. Monomeric. Homodimer; disulfide-linked in vitro. Also homooligomeric in vitro. Post-translationally, the formation of an intramolecular disulfide bond between cysteines Cys-38 and Cys-83 specifically enhances the nitrite reductase activity. In terms of tissue distribution, expressed in brain and retina by non-neuronal cells (at protein level). This is the major globin expressed in vascular smooth muscle and is not present in the endothelium (at protein level).

It localises to the cytoplasm. The protein resides in the nucleus. It carries out the reaction Fe(II)-heme b-[protein] + nitric oxide + O2 = Fe(III)-heme b-[protein] + nitrate. The catalysed reaction is 2 superoxide + 2 H(+) = H2O2 + O2. It catalyses the reaction Fe(III)-heme b-[protein] + nitric oxide + H2O = Fe(II)-heme b-[protein] + nitrite + 2 H(+). The enzyme catalyses H2O2 + AH2 = A + 2 H2O. The nitric oxide dioxygenase activity is activated by a reducing system composed of cytochrome b5, its upstream reductase CYB5R3 and NADH. Its function is as follows. Probable multifunctional globin with a hexacoordinated heme iron required for the catalysis of various reactions depending on redox condition of the cell as well as oxygen availability. Has a nitric oxide dioxygenase (NOD) activity and is most probably involved in cell-mediated and oxygen-dependent nitric oxide consumption. By scavenging this second messenger may regulate several biological processes including endothelium-mediated vasodilation and vascular tone. Under normoxic conditions functions as a nitric oxide dioxygenase (NOD) but under hypoxic conditions the globin may switch its function to that of a nitrite (NO2) reductase (NiR), generating nitric oxide. Could also have peroxidase and superoxide dismutase activities, detoxifying reactive oxygen species and protecting cells against oxidative stress. Also binds dioxygen with low affinity and could function as an oxygen sensor but has probably no function as a respiratory oxygen carrier. In Mus musculus (Mouse), this protein is Cytoglobin.